Consider the following 937-residue polypeptide: Valine--tRNA ligase (937 aa).

Residues 44-54 (PNVTGTLHMGH) carry the 'HIGH' region motif. The 'KMSKS' region signature appears at 548 to 552 (KMSKS). Position 551 (lysine 551) interacts with ATP. Residues 874–937 (AAETARLTKE…KLKAQLLKLA (64 aa)) adopt a coiled-coil conformation.

Belongs to the class-I aminoacyl-tRNA synthetase family. ValS type 1 subfamily. In terms of assembly, monomer.

The protein resides in the cytoplasm. It carries out the reaction tRNA(Val) + L-valine + ATP = L-valyl-tRNA(Val) + AMP + diphosphate. In terms of biological role, catalyzes the attachment of valine to tRNA(Val). As ValRS can inadvertently accommodate and process structurally similar amino acids such as threonine, to avoid such errors, it has a 'posttransfer' editing activity that hydrolyzes mischarged Thr-tRNA(Val) in a tRNA-dependent manner. The polypeptide is Valine--tRNA ligase (Laribacter hongkongensis (strain HLHK9)).